Consider the following 142-residue polypeptide: ATP synthase F(0) complex subunit C3, mitochondrial (142 aa).

A mitochondrion-targeting transit peptide spans 1-67 (MFACAKLACT…REFQTSAISR (67 aa)). The chain crosses the membrane as a helical span at residues 83–103 (VGVAGSGAGIGTVFGSLIIGY). Lys110 is subject to N6,N6,N6-trimethyllysine. A helical membrane pass occupies residues 118-138 (ILGFALSEAMGLFCLMVAFLI).

This sequence belongs to the ATPase C chain family. As to quaternary structure, F-type ATPases have 2 components, CF(1) - the catalytic core - and CF(0) - the membrane proton channel. CF(1) has five subunits: alpha(3), beta(3), gamma(1), delta(1), epsilon(1). CF(0) has three main subunits: a, b and c. Interacts with TMEM70 and TMEM242. Trimethylated by ATPSCKMT at Lys-110. Methylation is required for proper incorporation of the C subunit into the ATP synthase complex and mitochondrial respiration.

The protein localises to the mitochondrion membrane. Functionally, mitochondrial membrane ATP synthase (F(1)F(0) ATP synthase or Complex V) produces ATP from ADP in the presence of a proton gradient across the membrane which is generated by electron transport complexes of the respiratory chain. F-type ATPases consist of two structural domains, F(1) - containing the extramembraneous catalytic core and F(0) - containing the membrane proton channel, linked together by a central stalk and a peripheral stalk. During catalysis, ATP synthesis in the catalytic domain of F(1) is coupled via a rotary mechanism of the central stalk subunits to proton translocation. Part of the complex F(0) domain. A homomeric c-ring of probably 10 subunits is part of the complex rotary element. The polypeptide is ATP synthase F(0) complex subunit C3, mitochondrial (Pongo abelii (Sumatran orangutan)).